The following is a 307-amino-acid chain: MPKKCRHLLQTSDLSLDEIKLLLKKASVYANDFNAVSLETKEKMQNKIIVALFFENSTRTVSSFEIASLRLGAKIVKLNMQTSSASKGETLTDTFKNIYAMQPDAIITRHAFSSAPFKLAEFSQCPLINAGSGVSAHPTQALLDLLTLYQHFGSLENLKGKKIAFIGDVKNSRVANSNIKLLQRLGLEIMLCAPSSMLPSVSLKTTHNIEEAIEFADILMSLRTQTERHNAPIFASLKDYGNAYCITQKRLEAHAKNKEIIILHPGPVHRDIDIESAVLEDKRSKVLEQVKNGVAMRMAVLEFLLLD.

Arginine 59 and threonine 60 together coordinate carbamoyl phosphate. Residue lysine 87 coordinates L-aspartate. 3 residues coordinate carbamoyl phosphate: arginine 109, histidine 137, and glutamine 140. 2 residues coordinate L-aspartate: arginine 173 and arginine 223. Carbamoyl phosphate-binding residues include glycine 266 and proline 267.

This sequence belongs to the aspartate/ornithine carbamoyltransferase superfamily. ATCase family. In terms of assembly, heterododecamer (2C3:3R2) of six catalytic PyrB chains organized as two trimers (C3), and six regulatory PyrI chains organized as three dimers (R2).

The enzyme catalyses carbamoyl phosphate + L-aspartate = N-carbamoyl-L-aspartate + phosphate + H(+). Its pathway is pyrimidine metabolism; UMP biosynthesis via de novo pathway; (S)-dihydroorotate from bicarbonate: step 2/3. Catalyzes the condensation of carbamoyl phosphate and aspartate to form carbamoyl aspartate and inorganic phosphate, the committed step in the de novo pyrimidine nucleotide biosynthesis pathway. The protein is Aspartate carbamoyltransferase catalytic subunit of Helicobacter pylori (strain Shi470).